A 322-amino-acid polypeptide reads, in one-letter code: MIFSTLEHILTHISFSIVSIVITLHLITLLGNEIIKPYDSSEKGMIATFLCLTGLLITRWIYSGHFPLSDLYESFIFLSWSFSLIHIVPYFKIRKNDLTTITASSTIFTQGFATSGLLNEIHKPTILVPALQSEWLIMHVSMMILSYAALLCGSLLSVALLVITFRNIFYSSKSNNFLKLNESFSFGEIQYKNERNNIFQKTYFFSDKNYYKAQFIQQLDYWSYRVISLGFIFLTIGILSGAVWANEAWGSYWSWDPKETWAFITWIVFAIYLHTRTKKNLQGANSAIVATLGFLIIWICYFGVNLLGIGLHSYGSFTLTSS.

Transmembrane regions (helical) follow at residues 9–29 (ILTH…LITL), 44–64 (GMIA…IYSG), 71–91 (LYES…VPYF), 98–118 (LTTI…SGLL), 143–163 (MILS…LLVI), 226–246 (VISL…VWAN), 253–273 (WSWD…AIYL), and 287–307 (AIVA…VNLL).

The protein belongs to the CcmF/CycK/Ccl1/NrfE/CcsA family. As to quaternary structure, may interact with Ccs1.

The protein resides in the plastid. The protein localises to the chloroplast thylakoid membrane. In terms of biological role, required during biogenesis of c-type cytochromes (cytochrome c6 and cytochrome f) at the step of heme attachment. The polypeptide is Cytochrome c biogenesis protein CcsA (Guizotia abyssinica (Niger)).